A 176-amino-acid chain; its full sequence is ATP synthase subunit delta (176 aa).

It belongs to the ATPase delta chain family. In terms of assembly, F-type ATPases have 2 components, F(1) - the catalytic core - and F(0) - the membrane proton channel. F(1) has five subunits: alpha(3), beta(3), gamma(1), delta(1), epsilon(1). F(0) has three main subunits: a(1), b(2) and c(10-14). The alpha and beta chains form an alternating ring which encloses part of the gamma chain. F(1) is attached to F(0) by a central stalk formed by the gamma and epsilon chains, while a peripheral stalk is formed by the delta and b chains.

The protein localises to the cell membrane. F(1)F(0) ATP synthase produces ATP from ADP in the presence of a proton or sodium gradient. F-type ATPases consist of two structural domains, F(1) containing the extramembraneous catalytic core and F(0) containing the membrane proton channel, linked together by a central stalk and a peripheral stalk. During catalysis, ATP synthesis in the catalytic domain of F(1) is coupled via a rotary mechanism of the central stalk subunits to proton translocation. Its function is as follows. This protein is part of the stalk that links CF(0) to CF(1). It either transmits conformational changes from CF(0) to CF(1) or is implicated in proton conduction. In Wigglesworthia glossinidia brevipalpis, this protein is ATP synthase subunit delta.